The following is a 334-amino-acid chain: MRVLASAPAKIILFGEHSVVYGKPAIAAAINLRTYVWAEFNERGAIKIEAKDIRVPGLTVSFSEDEIYFESDYGKAAEVLSYVRQAIELVREEADKNGRGITVSITSQIPVGAGLGSSAAVAVATIGAVSRLLGLELTNEEIGKLGHRVELLVQGASSGIDPTVSAIGGFIHYEKGKFEPLPFMELPIVVGYTGSSGSTKELVAMVRRTREEMPEIIEPILLSMGKVVEKAKEILLSDLEEKIRFERLGKLMNINHGLLDALGVSTKKLSELVYAARTAGALGAKITGAGGGGCMYALAPEKQSEVATAITIAGGTPMITEISKEGLRIEEVIP.

110 to 120 (PVGAGLGSSAA) lines the ATP pocket. Asp-161 acts as the Proton acceptor in catalysis.

The protein belongs to the GHMP kinase family. Mevalonate kinase subfamily. Homodimer. It depends on Mg(2+) as a cofactor.

The protein resides in the cytoplasm. The catalysed reaction is (R)-mevalonate + ATP = (R)-5-phosphomevalonate + ADP + H(+). It functions in the pathway isoprenoid biosynthesis; isopentenyl diphosphate biosynthesis via mevalonate pathway; isopentenyl diphosphate from (R)-mevalonate: step 1/3. Catalyzes the phosphorylation of (R)-mevalonate (MVA) to (R)-mevalonate 5-phosphate (MVAP). Functions in the mevalonate (MVA) pathway leading to isopentenyl diphosphate (IPP), a key precursor for the biosynthesis of isoprenoid compounds such as archaeal membrane lipids. This chain is Mevalonate kinase, found in Thermococcus gammatolerans (strain DSM 15229 / JCM 11827 / EJ3).